The sequence spans 180 residues: Ribulose bisphosphate carboxylase small subunit, chloroplastic 4 (180 aa).

The N-terminal 56 residues, Met-1–Ser-56, are a transit peptide targeting the chloroplast.

Belongs to the RuBisCO small chain family. As to quaternary structure, heterohexadecamer of 8 large and 8 small subunits. In terms of assembly, (Microbial infection) Binds to tobamovirus movement protein; this interaction seems required for viral systemic movement.

Its subcellular location is the plastid. It is found in the chloroplast. The protein localises to the cell junction. The protein resides in the plasmodesma. Functionally, ruBisCO catalyzes two reactions: the carboxylation of D-ribulose 1,5-bisphosphate, the primary event in carbon dioxide fixation, as well as the oxidative fragmentation of the pentose substrate. Both reactions occur simultaneously and in competition at the same active site. Although the small subunit is not catalytic it is essential for maximal activity. Involved in antiviral defenses. The chain is Ribulose bisphosphate carboxylase small subunit, chloroplastic 4 from Solanum lycopersicum (Tomato).